Reading from the N-terminus, the 269-residue chain is Regulating synaptic membrane exocytosis protein 4 (269 aa).

Positions proline 115–tyrosine 233 constitute a C2 domain. Phosphoserine is present on residues serine 254 and serine 257.

In terms of assembly, binds PPFIA3. Brain specific.

The protein resides in the synapse. Functionally, regulates synaptic membrane exocytosis. This chain is Regulating synaptic membrane exocytosis protein 4 (Rims4), found in Rattus norvegicus (Rat).